The following is a 456-amino-acid chain: Chromosomal replication initiator protein DnaA (456 aa).

Positions 1–85 (MDADLNKLWE…EIKFIIESDL (85 aa)) are domain I, interacts with DnaA modulators. A domain II region spans residues 85–117 (LNNEDELNNSDNSDKNRDKNSRRNIVVNDEMSS). Residues 118–334 (TLNPKYTFNS…GALIRIIAYS (217 aa)) are domain III, AAA+ region. Glycine 162, glycine 164, lysine 165, and threonine 166 together coordinate ATP. Residues 335-456 (SLTNREVTVD…SDITKKVSQN (122 aa)) form a domain IV, binds dsDNA region.

It belongs to the DnaA family. Oligomerizes as a right-handed, spiral filament on DNA at oriC.

The protein resides in the cytoplasm. Its function is as follows. Plays an essential role in the initiation and regulation of chromosomal replication. ATP-DnaA binds to the origin of replication (oriC) to initiate formation of the DNA replication initiation complex once per cell cycle. Binds the DnaA box (a 9 base pair repeat at the origin) and separates the double-stranded (ds)DNA. Forms a right-handed helical filament on oriC DNA; dsDNA binds to the exterior of the filament while single-stranded (ss)DNA is stabiized in the filament's interior. The ATP-DnaA-oriC complex binds and stabilizes one strand of the AT-rich DNA unwinding element (DUE), permitting loading of DNA polymerase. After initiation quickly degrades to an ADP-DnaA complex that is not apt for DNA replication. Binds acidic phospholipids. This chain is Chromosomal replication initiator protein DnaA, found in Clostridium botulinum (strain Eklund 17B / Type B).